The chain runs to 283 residues: Bifunctional protein FolD (283 aa).

Residues 163 to 165 (GRS), Ser-188, and Ile-229 contribute to the NADP(+) site.

Belongs to the tetrahydrofolate dehydrogenase/cyclohydrolase family. Homodimer.

It carries out the reaction (6R)-5,10-methylene-5,6,7,8-tetrahydrofolate + NADP(+) = (6R)-5,10-methenyltetrahydrofolate + NADPH. The catalysed reaction is (6R)-5,10-methenyltetrahydrofolate + H2O = (6R)-10-formyltetrahydrofolate + H(+). It functions in the pathway one-carbon metabolism; tetrahydrofolate interconversion. Functionally, catalyzes the oxidation of 5,10-methylenetetrahydrofolate to 5,10-methenyltetrahydrofolate and then the hydrolysis of 5,10-methenyltetrahydrofolate to 10-formyltetrahydrofolate. The chain is Bifunctional protein FolD from Campylobacter fetus subsp. fetus (strain 82-40).